The chain runs to 203 residues: Cupin-domain-containing oxidoreductase fogC (203 aa).

The cupin-like domain stretch occupies residues 105–171; that stretch reads DFAPGVESPL…GNGTLPGRML (67 aa).

This sequence belongs to the virC family.

It participates in secondary metabolite biosynthesis. In terms of biological role, cupin-domain-containing oxidoreductase; part of the gene cluster that mediates the biosynthesis of flavoglaucin and congeners (including aspergin, dihydroauroglaucin and auroglaucin), prenylated salicylaldehyde derivatives carrying a saturated or an unsaturated C-7 side chain. The PKS fogA releases the carboxylic acid (8E,10E,12E)-3,5,7-trihydroxytetradeca-8,10,12-trienoic acid as its product, as well as derivatives with one and two double bonds. FogA is indeed able to reduce the initial triketide, thus being at least partially responsible for the differently saturated heptyl side chains of flavoglaucin congeners. The oxidoreductases fogB, fogC and fogD modify the nascent polyketide in fogA-bound form and, together, fogA, fogB, fogC and fogD are necessary for the formation of the aromatic core and the cyclized PKS products are released as salicyl alcohols. In particular, fogB is responsible for oxidation of a hydroxyl group or reduction of remaining double bond(s) at the C-7 residue whereas fogD is probably involved in the reductive release of the modified PKS products. The cytochrome P450 monooxygenase fogE is then responsible for the hydroxylation at C-3 of the benzene ring. The fogE products are substrates of the prenyltransferase fogH and the prenylated benzyl alcohols are subsequently oxidized by the fogF to produce the final aryl aldehydes flavoglaucin and congeners. The short-chain dehydrogenase fogG does not seem to be involved in the biosynthesis of the prenylated salicylaldehyde derivatives. This Aspergillus ruber (strain CBS 135680) protein is Cupin-domain-containing oxidoreductase fogC.